A 460-amino-acid polypeptide reads, in one-letter code: tRNA modification GTPase MnmE (460 aa).

Arg-25, Glu-87, and Arg-126 together coordinate (6S)-5-formyl-5,6,7,8-tetrahydrofolate. The region spanning 221-381 is the TrmE-type G domain; it reads GLKVAIVGRP…LETAIANLVQ (161 aa). Residue Asn-231 participates in K(+) binding. GTP-binding positions include 231–236, 250–256, and 275–278; these read NVGKSS, TDLPGTT, and DTAG. Residue Ser-235 coordinates Mg(2+). K(+) is bound by residues Thr-250, Leu-252, and Thr-255. Residue Thr-256 coordinates Mg(2+). (6S)-5-formyl-5,6,7,8-tetrahydrofolate is bound at residue Lys-460.

Belongs to the TRAFAC class TrmE-Era-EngA-EngB-Septin-like GTPase superfamily. TrmE GTPase family. As to quaternary structure, homodimer. Heterotetramer of two MnmE and two MnmG subunits. K(+) serves as cofactor.

The protein resides in the cytoplasm. In terms of biological role, exhibits a very high intrinsic GTPase hydrolysis rate. Involved in the addition of a carboxymethylaminomethyl (cmnm) group at the wobble position (U34) of certain tRNAs, forming tRNA-cmnm(5)s(2)U34. The polypeptide is tRNA modification GTPase MnmE (Picosynechococcus sp. (strain ATCC 27264 / PCC 7002 / PR-6) (Agmenellum quadruplicatum)).